We begin with the raw amino-acid sequence, 395 residues long: RNA polymerase II elongation factor ELL3 (395 aa).

Disordered stretches follow at residues 124 to 149, 163 to 182, 194 to 218, and 233 to 279; these read SSLQRHNRTEDARDRESWQNVGDYPE, VPDPLASSQGQSLPGSSREH, LPNRDPDQALPPSASQKHVDKKRPA, and LAPS…SLSP. Basic and acidic residues predominate over residues 130 to 140; sequence NRTEDARDRES. Residues 168–177 show a composition bias toward polar residues; the sequence is ASSQGQSLPG. Acidic residues predominate over residues 246-258; that stretch reads LQEEDWEQEDKDE. Residues 268–277 show a composition bias toward polar residues; sequence PSVQADSESL. Residues 283–393 form the OCEL domain; that stretch reads PDYLLQYRAI…LILEFEEKNR (111 aa).

It belongs to the ELL/occludin family. In terms of assembly, interacts with AFF4. Component of the super elongation complex (SEC), at least composed of EAF1, EAF2, CDK9, MLLT3/AF9, AFF (AFF1 or AFF4), the P-TEFb complex and ELL (ELL, ELL2 or ELL3). Component of the little elongation complex (LEC), at least composed of ELL (ELL, ELL2 or ELL3), ZC3H8, ICE1 and ICE2.

The protein localises to the nucleus. In terms of biological role, enhancer-binding elongation factor that specifically binds enhancers in embryonic stem cells (ES cells), marks them, and is required for their future activation during stem cell specification. Elongation factor component of the super elongation complex (SEC), a complex required to increase the catalytic rate of RNA polymerase II transcription by suppressing transient pausing by the polymerase at multiple sites along the DNA. Component of the little elongation complex (LEC), a complex required to regulate small nuclear RNA (snRNA) gene transcription by RNA polymerase II and III. Does not only bind to enhancer regions of active genes, but also marks the enhancers that are in a poised or inactive state in ES cells and is required for establishing proper RNA polymerase II occupancy at developmentally regulated genes in a cohesin-dependent manner. Probably required for priming developmentally regulated genes for later recruitment of the super elongation complex (SEC), for transcriptional activation during differentiation. Required for recruitment of P-TEFb within SEC during differentiation. Probably preloaded on germ cell chromatin, suggesting that it may prime gene activation by marking enhancers as early as in the germ cells. Promoting epithelial-mesenchymal transition (EMT). The chain is RNA polymerase II elongation factor ELL3 (ELL3) from Bos taurus (Bovine).